Reading from the N-terminus, the 253-residue chain is Ethylene-responsive transcription factor RAP2-11 (253 aa).

A DNA-binding region (AP2/ERF) is located at residues 21–78; that stretch reads KFVGVRQRPSGKWVAEIKDTTQKIRMWLGTFETAEEAARAYDEAACLLRGSNTRTNFA.

It belongs to the AP2/ERF transcription factor family. ERF subfamily.

The protein localises to the nucleus. In terms of biological role, probably acts as a transcriptional activator. Binds to the GCC-box pathogenesis-related promoter element. May be involved in the regulation of gene expression by stress factors and by components of stress signal transduction pathways. The chain is Ethylene-responsive transcription factor RAP2-11 (RAP2-11) from Arabidopsis thaliana (Mouse-ear cress).